A 378-amino-acid chain; its full sequence is Fetuin-B (378 aa).

The first 18 residues, 1-18 (MGVLRLLVLCTLAACCVA), serve as a signal peptide directing secretion. 2 consecutive Cystatin fetuin-B-type domains span residues 28-141 (NAPF…YNCT) and 152-261 (SMCP…VSCE). An N-linked (GlcNAc...) asparagine glycan is attached at N40. Cystine bridges form between C96/C107, C120/C140, C154/C157, C217/C224, and C237/C260. N139 carries N-linked (GlcNAc...) asparagine glycosylation. 2 disordered regions span residues 266–338 (QDQV…PQGD) and 357–378 (LPFP…QRTP). The segment covering 286–297 (QKNTAPTSSPSI) has biased composition (polar residues). T289 and T292 each carry an O-linked (GalNAc...) threonine glycan. S316 is modified (phosphoserine). Basic and acidic residues predominate over residues 362-378 (KEQRSPECPGPEKQRTP).

Belongs to the fetuin family. Liver.

It is found in the secreted. Its function is as follows. Protease inhibitor required for egg fertilization. Required to prevent premature zona pellucida hardening before fertilization, probably by inhibiting the protease activity of ASTL, a protease that mediates the cleavage of ZP2 and triggers zona pellucida hardening. In Rattus norvegicus (Rat), this protein is Fetuin-B (Fetub).